The sequence spans 204 residues: Sex-determining region Y protein (204 aa).

The interval 59–136 is sufficient for interaction with KPNB1; sequence RVKRPMNAFI…YKYRPRRKAK (78 aa). The HMG box DNA-binding region spans 60 to 128; the sequence is VKRPMNAFIV…MHREKYPNYK (69 aa). 2 required for nuclear localization regions span residues 61–77 and 130–136; these read KRPM…QRRK and RPRRKAK. The interval 107-139 is sufficient for interaction with EP300; the sequence is WPFFQEAQKLQAMHREKYPNYKYRPRRKAKMLP. Lys-136 is modified (N6-acetyllysine). A necessary for interaction with ZNF208 isoform KRAB-O region spans residues 138-155; the sequence is LPKNCSLLPADPASVLCS. The tract at residues 175–204 is disordered; sequence RMEHQLGHLPPINAASSPQQRDRYSHWTKL. A compositionally biased stretch (basic and acidic residues) spans 194-204; the sequence is QRDRYSHWTKL. Positions 198–204 are necessary for interaction with SLC9A3R2; that stretch reads YSHWTKL.

This sequence belongs to the SRY family. In terms of assembly, interacts with CALM, EP300, HDAC3, KPNB1, ZNF208 isoform KRAB-O, PARP1, SLC9A3R2 and WT1. The interaction with EP300 modulates its DNA-binding activity. The interaction with KPNB1 is sensitive to dissociation by Ran in the GTP-bound form. Interaction with PARP1 impaired its DNA-binding activity. Phosphorylated on serine residues by PKA. Phosphorylation by PKA enhances its DNA-binding activity and stimulates transcription repression. Post-translationally, acetylation of Lys-136 contributes to its nuclear localization and enhances its interaction with KPNB1. Deacetylated by HDAC3. In terms of processing, poly-ADP-ribosylated by PARP1. ADP-ribosylation reduces its DNA-binding activity.

It localises to the nucleus speckle. The protein localises to the cytoplasm. It is found in the nucleus. In terms of biological role, transcriptional regulator that controls a genetic switch in male development. It is necessary and sufficient for initiating male sex determination by directing the development of supporting cell precursors (pre-Sertoli cells) as Sertoli rather than granulosa cells. Involved in different aspects of gene regulation including promoter activation or repression. Binds to the DNA consensus sequence 5'-[AT]AACAA[AT]-3'. SRY HMG box recognizes DNA by partial intercalation in the minor groove and promotes DNA bending. Also involved in pre-mRNA splicing. In male adult brain involved in the maintenance of motor functions of dopaminergic neurons. The sequence is that of Sex-determining region Y protein from Homo sapiens (Human).